The primary structure comprises 98 residues: NADH-ubiquinone oxidoreductase chain 4L (98 aa).

The next 3 membrane-spanning stretches (helical) occupy residues 1-21 (MIPTYMNIMLAFTISLLGMLT), 27-47 (VASLLCLEGMTMSLFIMTALI), and 61-81 (IILLVFAACEAAVGLALLISI).

The protein belongs to the complex I subunit 4L family. Core subunit of respiratory chain NADH dehydrogenase (Complex I) which is composed of 45 different subunits.

It is found in the mitochondrion inner membrane. The catalysed reaction is a ubiquinone + NADH + 5 H(+)(in) = a ubiquinol + NAD(+) + 4 H(+)(out). Its function is as follows. Core subunit of the mitochondrial membrane respiratory chain NADH dehydrogenase (Complex I) which catalyzes electron transfer from NADH through the respiratory chain, using ubiquinone as an electron acceptor. Part of the enzyme membrane arm which is embedded in the lipid bilayer and involved in proton translocation. The protein is NADH-ubiquinone oxidoreductase chain 4L (MT-ND4L) of Macaca sylvanus (Barbary macaque).